Reading from the N-terminus, the 454-residue chain is MSESTTAKPTKKLYIQTHGCQMNEYDSSRMRDLLGASHDMVPTDNPEEADVLLVNTCSIREKAQEKLFHQLGRWKHLKEAKPDLVIGVGGCVASQEGDAISKRAPFVDLIFGPQTLHRLPEMIETPRENGAVVVDISFPEIEKFDNLPEPEADGATAFVSVMEGCSKYCTFCVVPYTRGEEVSRPAVDVLREVTHLASQGVREVNLLGQNVNAYRDDSSGEVIDLAELIAAVADIDGIDRIRFTTSHPMEFTESLIQAYAEIPELVSHLHLPVQSGSDRILSAMKRGHTCLEYKSKLRKIRALRPDISFSSDFIIGFPGETEADFAATMKLIEDIGFDNSFSFIYSPRPGTPAADLPDDTPEQVKKDRLKILQTRIIQQAQEISRRMVGNTERVLVTGYSKKDPGQLSGRTENNRVVNFRCNQPELIGKFADILIEEALPNSLRGVLLGSELDD.

Positions 11–128 constitute an MTTase N-terminal domain; sequence KKLYIQTHGC…LPEMIETPRE (118 aa). Residues cysteine 20, cysteine 57, cysteine 91, cysteine 165, cysteine 169, and cysteine 172 each coordinate [4Fe-4S] cluster. Residues 151–382 form the Radical SAM core domain; it reads EADGATAFVS…QTRIIQQAQE (232 aa). Residues 385 to 449 enclose the TRAM domain; that stretch reads RRMVGNTERV…PNSLRGVLLG (65 aa).

Belongs to the methylthiotransferase family. MiaB subfamily. As to quaternary structure, monomer. It depends on [4Fe-4S] cluster as a cofactor.

Its subcellular location is the cytoplasm. It catalyses the reaction N(6)-dimethylallyladenosine(37) in tRNA + (sulfur carrier)-SH + AH2 + 2 S-adenosyl-L-methionine = 2-methylsulfanyl-N(6)-dimethylallyladenosine(37) in tRNA + (sulfur carrier)-H + 5'-deoxyadenosine + L-methionine + A + S-adenosyl-L-homocysteine + 2 H(+). Its function is as follows. Catalyzes the methylthiolation of N6-(dimethylallyl)adenosine (i(6)A), leading to the formation of 2-methylthio-N6-(dimethylallyl)adenosine (ms(2)i(6)A) at position 37 in tRNAs that read codons beginning with uridine. This Saccharophagus degradans (strain 2-40 / ATCC 43961 / DSM 17024) protein is tRNA-2-methylthio-N(6)-dimethylallyladenosine synthase.